A 77-amino-acid polypeptide reads, in one-letter code: U8-lycotoxin-Ls1t (77 aa).

A signal peptide spans 1-20 (MKLIIFTGLVPFAIVSLIEA). Residues 21–26 (QAENEK) constitute a propeptide that is removed on maturation.

This sequence belongs to the neurotoxin 19 (CSTX) family. 08 (U8-Lctx) subfamily. Post-translationally, contains 4 disulfide bonds. In terms of tissue distribution, expressed by the venom gland.

The protein localises to the secreted. The polypeptide is U8-lycotoxin-Ls1t (Lycosa singoriensis (Wolf spider)).